Consider the following 805-residue polypeptide: Serine/threonine-protein kinase fused (805 aa).

A Protein kinase domain is found at 4-254 (YAVSSLVGQG…WTQLLCHPFV (251 aa)). ATP-binding positions include 10–18 (VGQGSFGCV) and Lys33. The active-site Proton acceptor is Asp125. Positions 269 to 289 (KESPFTNPEAKVKSSKQSDPE) are disordered. The segment covering 278–287 (AKVKSSKQSD) has biased composition (basic and acidic residues). Phosphoserine occurs at positions 422 and 429. Positions 447–456 (IATQEKHNQE) are enriched in basic and acidic residues. A disordered region spans residues 447-496 (IATQEKHNQENKPPAEAISYANSQPPQQQPQQLKHSMHSTNEEKLSSDNT).

It belongs to the protein kinase superfamily. Ser/Thr protein kinase family. As to expression, expressed in all imaginal disks, higher level in wing disk.

The catalysed reaction is L-seryl-[protein] + ATP = O-phospho-L-seryl-[protein] + ADP + H(+). The enzyme catalyses L-threonyl-[protein] + ATP = O-phospho-L-threonyl-[protein] + ADP + H(+). Probable serine/threonine-protein kinase; maternally required for correct patterning in the posterior part of each embryonic metamere. May be involved in control of cell division during metamorphosis and ovarian development. May interact with costal-2. The chain is Serine/threonine-protein kinase fused (fu) from Drosophila melanogaster (Fruit fly).